Reading from the N-terminus, the 303-residue chain is Hemolysin E (303 aa).

A disulfide bridge links C87 with C285. The helical transmembrane segment at 183 to 203 threads the bilayer; it reads AGVVAGPFGLIISYSIAAGVV.

The protein belongs to the hemolysin E family. In terms of assembly, monomer and oligomer. In periplasm, it is present as a monomer, while in outer membrane vesicles, it oligomerizes to form a pore structure that is active. The pore is formed by a dodecamer. Post-translationally, in periplasm, it forms a disulfide bond, which prevents the oligomerization. In outer membrane vesicles, the redox status prevents formation of the disulfide bond, leading to oligomerization and pore formation.

It is found in the secreted. Its subcellular location is the periplasm. The protein resides in the host cell membrane. Functionally, toxin, which has some hemolytic activity towards mammalian cells. Acts by forming a pore-like structure upon contact with mammalian cells. This is Hemolysin E (hlyE) from Escherichia coli O157:H7.